The chain runs to 152 residues: Deoxyuridine 5'-triphosphate nucleotidohydrolase (152 aa).

Substrate is bound by residues 71–73, N84, 88–90, and M98; these read RSG and LID.

The protein belongs to the dUTPase family. Mg(2+) is required as a cofactor.

The catalysed reaction is dUTP + H2O = dUMP + diphosphate + H(+). Its pathway is pyrimidine metabolism; dUMP biosynthesis; dUMP from dCTP (dUTP route): step 2/2. Its function is as follows. This enzyme is involved in nucleotide metabolism: it produces dUMP, the immediate precursor of thymidine nucleotides and it decreases the intracellular concentration of dUTP so that uracil cannot be incorporated into DNA. The polypeptide is Deoxyuridine 5'-triphosphate nucleotidohydrolase (Coxiella burnetii (strain Dugway 5J108-111)).